The following is a 332-amino-acid chain: Formamidase (332 aa).

The CN hydrolase domain occupies 14 to 259 (FLTALIQYPV…WEIVTAEVYP (246 aa)). The active-site Proton acceptor is Glu-60. Lys-132 functions as the Proton donor in the catalytic mechanism. Cys-165 functions as the Nucleophile in the catalytic mechanism.

The protein belongs to the carbon-nitrogen hydrolase superfamily. Aliphatic amidase family.

It carries out the reaction formamide + H2O = formate + NH4(+). Is an aliphatic amidase with a restricted substrate specificity, as it only hydrolyzes formamide. The chain is Formamidase from Bacillus thuringiensis (strain Al Hakam).